A 199-amino-acid polypeptide reads, in one-letter code: Holliday junction branch migration complex subunit RuvA (199 aa).

Residues 1–64 (MIALLTGRLA…EDSISLFGFR (64 aa)) form a domain I region. The interval 65–143 (TLAEKEFFQL…KMDVAPSAQE (79 aa)) is domain II. The interval 144-154 (APSSEAPAEVA) is flexible linker. The tract at residues 154 to 199 (ADDVASALVNLGYKEAVVRKVLAEMSIEPDASTEAVLRQALKVLMK) is domain III.

It belongs to the RuvA family. In terms of assembly, homotetramer. Forms an RuvA(8)-RuvB(12)-Holliday junction (HJ) complex. HJ DNA is sandwiched between 2 RuvA tetramers; dsDNA enters through RuvA and exits via RuvB. An RuvB hexamer assembles on each DNA strand where it exits the tetramer. Each RuvB hexamer is contacted by two RuvA subunits (via domain III) on 2 adjacent RuvB subunits; this complex drives branch migration. In the full resolvosome a probable DNA-RuvA(4)-RuvB(12)-RuvC(2) complex forms which resolves the HJ.

It is found in the cytoplasm. The RuvA-RuvB-RuvC complex processes Holliday junction (HJ) DNA during genetic recombination and DNA repair, while the RuvA-RuvB complex plays an important role in the rescue of blocked DNA replication forks via replication fork reversal (RFR). RuvA specifically binds to HJ cruciform DNA, conferring on it an open structure. The RuvB hexamer acts as an ATP-dependent pump, pulling dsDNA into and through the RuvAB complex. HJ branch migration allows RuvC to scan DNA until it finds its consensus sequence, where it cleaves and resolves the cruciform DNA. This chain is Holliday junction branch migration complex subunit RuvA, found in Geobacter sulfurreducens (strain ATCC 51573 / DSM 12127 / PCA).